The primary structure comprises 306 residues: Armadillo repeat-containing protein 10 (306 aa).

Residues 7-29 (VGWVAAGLVLGAGACYCIYRLTR) form a helical membrane-spanning segment. At serine 43 the chain carries Phosphoserine. The residue at position 48 (threonine 48) is a Phosphothreonine. The stretch at 101 to 143 (GGIPIVGNKINSLNQSIKEKALNALNNLSVNVENQTKIKIYVP) is one ARM repeat.

Interacts with the DNA-binding domain of p53/TP53.

It is found in the endoplasmic reticulum membrane. It localises to the mitochondrion outer membrane. Its function is as follows. May play a role in cell survival and cell growth. May suppress the transcriptional activity of p53/TP53. This is Armadillo repeat-containing protein 10 (Armc10) from Mus musculus (Mouse).